The following is a 207-amino-acid chain: DNA protection during starvation protein 1 (207 aa).

Over residues 1–12 (MTKKSTKSEAAS) the composition is skewed to basic and acidic residues. A disordered region spans residues 1 to 31 (MTKKSTKSEAASKTKKSGVPETGAQGVRAGG). H83, D110, and E114 together coordinate Fe cation.

Belongs to the Dps family. In terms of assembly, the 12 subunits form a hollow sphere into which the mineral iron core of up to 500 Fe(3+) can be deposited. The homododecameric forms at higher concentration of salt, the homodimeric form under reducing, low-salt conditions. The assembly of the dodecamer is irreversible.

The protein resides in the cytoplasm. Its subcellular location is the nucleoid. The catalysed reaction is 2 Fe(2+) + H2O2 + 2 H(+) = 2 Fe(3+) + 2 H2O. In terms of biological role, protects DNA from oxidative damage by sequestering intracellular Fe(2+) ion and storing it in the form of Fe(3+) oxyhydroxide mineral. One hydrogen peroxide oxidizes two Fe(2+) ions, which prevents hydroxyl radical production by the Fenton reaction. Both oligomeric forms of dps exhibit ferroxidase activity and DNA binding. Dodecameric dps is capable of Fe(2+) oxidation/mineralization. Only dimeric dps affords efficient DNA protection against hydroxyl radical-mediated cleavage. The chain is DNA protection during starvation protein 1 (dps1) from Deinococcus radiodurans (strain ATCC 13939 / DSM 20539 / JCM 16871 / CCUG 27074 / LMG 4051 / NBRC 15346 / NCIMB 9279 / VKM B-1422 / R1).